We begin with the raw amino-acid sequence, 420 residues long: Napsin-A (420 aa).

Residues 1–25 (MSPPPLLQPLLLLLPLLNVEPSGAT) form the signal peptide. Positions 26–63 (LIRIPLHRVQPGRRILNLLRGWREPAELPKLGAPSPGD) are cleaved as a propeptide — activation peptide. Residues 78 to 399 (YFGEIGLGTP…MKSSARVGLA (322 aa)) enclose the Peptidase A1 domain. N90 carries an N-linked (GlcNAc...) asparagine glycan. The active site involves D96. A disulfide bridge connects residues C109 and C116. N133 carries N-linked (GlcNAc...) asparagine glycosylation. The cysteines at positions 274 and 278 are disulfide-linked. The active site involves D283. Residues C317 and C354 are joined by a disulfide bond. N-linked (GlcNAc...) asparagine glycosylation is present at N336.

This sequence belongs to the peptidase A1 family. As to expression, expressed predominantly in adult lung (type II pneumocytes) and kidney and in fetal lung. Low levels in adult spleen and very low levels in peripheral blood leukocytes.

The protein resides in the secreted. May be involved in processing of pneumocyte surfactant precursors. In Homo sapiens (Human), this protein is Napsin-A (NAPSA).